Consider the following 347-residue polypeptide: Mediator of RNA polymerase II transcription subunit 7 (347 aa).

Disordered regions lie at residues 97–172 (GIER…TQTH) and 302–326 (VPVG…GAEE). Composition is skewed to low complexity over residues 108–171 (STTT…STQT) and 302–312 (VPVGARTGTTV).

The protein belongs to the Mediator complex subunit 7 family. In terms of assembly, component of the Mediator complex.

The protein resides in the nucleus. Its function is as follows. Component of the Mediator complex, a coactivator involved in the regulated transcription of nearly all RNA polymerase II-dependent genes. Mediator functions as a bridge to convey information from gene-specific regulatory proteins to the basal RNA polymerase II transcription machinery. Mediator is recruited to promoters by direct interactions with regulatory proteins and serves as a scaffold for the assembly of a functional preinitiation complex with RNA polymerase II and the general transcription factors. The chain is Mediator of RNA polymerase II transcription subunit 7 (med-7) from Neurospora crassa (strain ATCC 24698 / 74-OR23-1A / CBS 708.71 / DSM 1257 / FGSC 987).